We begin with the raw amino-acid sequence, 183 residues long: Translocon-associated protein subunit beta (183 aa).

The N-terminal stretch at 1–17 (MRLLAFAVLALFAVTQA) is a signal peptide. The Lumenal segment spans residues 18–146 (EEGARLLASK…REFDRRFSPH (129 aa)). Asn88 carries N-linked (GlcNAc...) asparagine glycosylation. A helical membrane pass occupies residues 147–167 (FLDWAAFGVMTLPSIGVPLLL). Topologically, residues 168–183 (WYSSKRKYDTPKTKKN) are cytoplasmic.

The protein belongs to the TRAP-beta family. In terms of assembly, heterotetramer of TRAP-alpha, TRAP-beta, TRAP-delta and TRAP-gamma. Interacts with STING1.

It localises to the endoplasmic reticulum membrane. Its function is as follows. TRAP proteins are part of a complex whose function is to bind calcium to the ER membrane and thereby regulate the retention of ER resident proteins. This is Translocon-associated protein subunit beta (SSR2) from Bos taurus (Bovine).